We begin with the raw amino-acid sequence, 707 residues long: E3 ubiquitin-protein ligase Praja-2 (707 aa).

Residues 1–10 are compositionally biased toward basic and acidic residues; the sequence is MSQYTEKEPS. Disordered stretches follow at residues 1-32, 72-120, and 250-314; these read MSQYTEKEPSVMDQESSKAAWPKPAGGYQTIT, PKEN…PSIA, and QNGQ…VRPK. Ser-2 is subject to N-acetylserine. Composition is skewed to polar residues over residues 74–83 and 109–119; these read ENTSGSSSLD and LNQSTESSPSI. A compositionally biased stretch (basic and acidic residues) spans 257–276; it reads RSSEDGVVRKRRQDDTDQGR. Residues 293–308 are compositionally biased toward polar residues; sequence EQNTSDRANHHGSSPE. Phosphoserine occurs at positions 306 and 320. Phosphoserine; by PKA is present on Ser-339. 2 disordered regions span residues 379–405 and 424–493; these read RVTQRETERNRVTSENGATASGRQESR and EDSS…QTSL. The span at 381–390 shows a compositional bias: basic and acidic residues; the sequence is TQRETERNRV. Thr-385 bears the Phosphothreonine; by PKA mark. Residues 391–401 are compositionally biased toward polar residues; sequence TSENGATASGR. At Ser-430 the chain carries Phosphoserine. Residues 465 to 481 show a composition bias toward acidic residues; it reads NDPELQSDSSGPEEENQ. Positions 482–491 are enriched in polar residues; sequence ELSLQEGEQT. The interval 530–707 is interaction with PRKAR1A, PRKAR2A and PRKAR2B; it reads DGNNNLEDDS…PANDNAEEAP (178 aa). Positions 549–569 are mediates interaction with TBC1D31; it reads WSLFDGFADGLGVAEAISYVD. An RING-type; atypical zinc finger spans residues 633 to 674; the sequence is CPICCSEYIKDDIATELPCHHFFHKPCVSIWLQKSGTCPVCR. The span at 685 to 701 shows a compositional bias: low complexity; that stretch reads SAAASSDPDPDASPAND. The tract at residues 685–707 is disordered; that stretch reads SAAASSDPDPDASPANDNAEEAP.

As to quaternary structure, binds ubiquitin-conjugating enzymes (E2s). In vitro, interacts with the ubiquitin-conjugating enzyme, UBE2D2. The phosphorylated form interacts with PRKAR1A, PRKAR2A and PRKAR2B. Binds the catalytic subunits of cAMP-dependent protein kinase. Interacts with MFHAS1. Interacts with TBC1D31; the interaction is direct and recruits PJA2 to centrosomes.

It is found in the cytoplasm. The protein resides in the cell membrane. It localises to the endoplasmic reticulum membrane. The protein localises to the golgi apparatus membrane. Its subcellular location is the synapse. It is found in the postsynaptic density. The protein resides in the cytoskeleton. It localises to the microtubule organizing center. The protein localises to the centrosome. It catalyses the reaction S-ubiquitinyl-[E2 ubiquitin-conjugating enzyme]-L-cysteine + [acceptor protein]-L-lysine = [E2 ubiquitin-conjugating enzyme]-L-cysteine + N(6)-ubiquitinyl-[acceptor protein]-L-lysine.. The protein operates within protein modification; protein ubiquitination. Its function is as follows. Has E2-dependent E3 ubiquitin-protein ligase activity. Responsible for ubiquitination of cAMP-dependent protein kinase type I and type II-alpha/beta regulatory subunits and for targeting them for proteasomal degradation. Essential for PKA-mediated long-term memory processes. Through the ubiquitination of MFHAS1, positively regulates the TLR2 signaling pathway that leads to the activation of the downstream p38 and JNK MAP kinases and promotes the polarization of macrophages toward the pro-inflammatory M1 phenotype. Plays a role in ciliogenesis by ubiquitinating OFD1. The polypeptide is E3 ubiquitin-protein ligase Praja-2 (Pja2) (Mus musculus (Mouse)).